The chain runs to 197 residues: Ribonuclease HII (197 aa).

Residues 3 to 192 form the RNase H type-2 domain; that stretch reads QLIAGVDEVG…VQLSLMQRGG (190 aa). Residues Asp9, Glu10, and Asp101 each contribute to the a divalent metal cation site.

The protein belongs to the RNase HII family. Requires Mn(2+) as cofactor. Mg(2+) is required as a cofactor.

The protein localises to the cytoplasm. The enzyme catalyses Endonucleolytic cleavage to 5'-phosphomonoester.. In terms of biological role, endonuclease that specifically degrades the RNA of RNA-DNA hybrids. This is Ribonuclease HII from Pseudoalteromonas atlantica (strain T6c / ATCC BAA-1087).